The chain runs to 223 residues: RNA pyrophosphohydrolase (223 aa).

Positions 6 to 149 constitute a Nudix hydrolase domain; the sequence is GFRPNVGIIL…KRGVYEMALT (144 aa). Positions 38–59 match the Nudix box motif; that stretch reads GGIDRGESPEQAMFRELHEEVG. A disordered region spans residues 175–223; it reads ERHMPDGGAPAGLDLPPGGSFDPHPDITSASDDPSPPPHNKAPFLPSQR. Residues 180–193 are compositionally biased toward low complexity; it reads DGGAPAGLDLPPGG.

This sequence belongs to the Nudix hydrolase family. RppH subfamily. Requires a divalent metal cation as cofactor.

Accelerates the degradation of transcripts by removing pyrophosphate from the 5'-end of triphosphorylated RNA, leading to a more labile monophosphorylated state that can stimulate subsequent ribonuclease cleavage. The sequence is that of RNA pyrophosphohydrolase from Variovorax paradoxus (strain S110).